The primary structure comprises 246 residues: Probable transcriptional regulatory protein APJL_1171 (246 aa).

Belongs to the TACO1 family.

It localises to the cytoplasm. The protein is Probable transcriptional regulatory protein APJL_1171 of Actinobacillus pleuropneumoniae serotype 3 (strain JL03).